The sequence spans 430 residues: Probable sulfoacetate transporter SauU (430 aa).

The next 10 membrane-spanning stretches (helical) occupy residues 47–67 (LGLV…LGGW), 83–103 (LIWG…ILVV), 142–162 (FARL…AAAG), 165–185 (EAFI…AFFF), 228–248 (WLVT…LTWL), 263–283 (LALF…LGGV), 301–321 (AVLF…TFTA), 327–347 (VILL…LWSL), 362–382 (MMNT…GYLI), and 390–410 (LPFM…LFIN).

Belongs to the major facilitator superfamily.

It localises to the cell membrane. Its function is as follows. May transport sulfoacetate into the cell. This is Probable sulfoacetate transporter SauU (sauU) from Cupriavidus necator (strain ATCC 17699 / DSM 428 / KCTC 22496 / NCIMB 10442 / H16 / Stanier 337) (Ralstonia eutropha).